Consider the following 73-residue polypeptide: Putative antimicrobial peptide clone 4 (73 aa).

Positions Met-1–Ala-22 are cleaved as a signal peptide. Residues Asp-45–Tyr-73 constitute a propeptide that is removed on maturation.

It belongs to the non-disulfide-bridged peptide (NDBP) superfamily. Short antimicrobial peptide (group 4) family. In terms of tissue distribution, expressed by the venom gland.

The protein localises to the secreted. Its function is as follows. Antimicrobial peptide. Has a high antibacterial activity against the Gram-positive bacterium S.aureus (MIC=5-17.30 uM), the methicillin-resistant S.aureus (MRSA) (MIC=17.30 uM), and E.faecalis (MIC=69.23 uM). Has antifungal activity against Candida spp. and one Cryptococcus neoformans strains with MICs values ranging from 6.25 to 100 uM. Also shows an inhibitory activity on C.albicans biofilms at high concentrations. Has a moderate hemolytic potency (18% at 20 uM). Also inhibits the growth of the five cancer cell lines tested. In the model of polymicrobial sepsis, it exhibits an antibiotic effect, reducing the levels of microorganisms in the infectious focus and the inflammatory responses in the lung and cecum of septic animals. This chain is Putative antimicrobial peptide clone 4, found in Tityus costatus (Brazilian scorpion).